We begin with the raw amino-acid sequence, 54 residues long: ATP synthase F(0) complex subunit 8 (54 aa).

The helical transmembrane segment at 8–24 (PWFSIMLLTWFTFSLLI) threads the bilayer.

It belongs to the ATPase protein 8 family. As to quaternary structure, component of the ATP synthase complex composed at least of ATP5F1A/subunit alpha, ATP5F1B/subunit beta, ATP5MC1/subunit c (homooctomer), MT-ATP6/subunit a, MT-ATP8/subunit 8, ATP5ME/subunit e, ATP5MF/subunit f, ATP5MG/subunit g, ATP5MK/subunit k, ATP5MJ/subunit j, ATP5F1C/subunit gamma, ATP5F1D/subunit delta, ATP5F1E/subunit epsilon, ATP5PF/subunit F6, ATP5PB/subunit b, ATP5PD/subunit d, ATP5PO/subunit OSCP. ATP synthase complex consists of a soluble F(1) head domain (subunits alpha(3) and beta(3)) - the catalytic core - and a membrane F(0) domain - the membrane proton channel (subunits c, a, 8, e, f, g, k and j). These two domains are linked by a central stalk (subunits gamma, delta, and epsilon) rotating inside the F1 region and a stationary peripheral stalk (subunits F6, b, d, and OSCP).

It localises to the mitochondrion membrane. Subunit 8, of the mitochondrial membrane ATP synthase complex (F(1)F(0) ATP synthase or Complex V) that produces ATP from ADP in the presence of a proton gradient across the membrane which is generated by electron transport complexes of the respiratory chain. ATP synthase complex consist of a soluble F(1) head domain - the catalytic core - and a membrane F(1) domain - the membrane proton channel. These two domains are linked by a central stalk rotating inside the F(1) region and a stationary peripheral stalk. During catalysis, ATP synthesis in the catalytic domain of F(1) is coupled via a rotary mechanism of the central stalk subunits to proton translocation. In vivo, can only synthesize ATP although its ATP hydrolase activity can be activated artificially in vitro. Part of the complex F(0) domain. This is ATP synthase F(0) complex subunit 8 from Gallus gallus (Chicken).